The sequence spans 255 residues: Phosphatidylglycerol--prolipoprotein diacylglyceryl transferase (255 aa).

3 helical membrane passes run Trp-15–Cys-35, Ile-46–Val-66, and Leu-84–Ser-104. Residue Arg-130 participates in a 1,2-diacyl-sn-glycero-3-phospho-(1'-sn-glycerol) binding. 3 helical membrane passes run Pro-169–Phe-189, Gly-196–Leu-216, and Val-228–Lys-248.

Belongs to the Lgt family.

It localises to the cell membrane. It carries out the reaction L-cysteinyl-[prolipoprotein] + a 1,2-diacyl-sn-glycero-3-phospho-(1'-sn-glycerol) = an S-1,2-diacyl-sn-glyceryl-L-cysteinyl-[prolipoprotein] + sn-glycerol 1-phosphate + H(+). It participates in protein modification; lipoprotein biosynthesis (diacylglyceryl transfer). In terms of biological role, catalyzes the transfer of the diacylglyceryl group from phosphatidylglycerol to the sulfhydryl group of the N-terminal cysteine of a prolipoprotein, the first step in the formation of mature lipoproteins. In Clostridium kluyveri (strain NBRC 12016), this protein is Phosphatidylglycerol--prolipoprotein diacylglyceryl transferase.